Here is a 288-residue protein sequence, read N- to C-terminus: 4-hydroxybenzoate octaprenyltransferase (288 aa).

8 helical membrane passes run 23 to 43 (IGSL…GRGI), 46 to 66 (AKIL…GCVV), 98 to 118 (ILFV…NSMT), 141 to 161 (LPQV…FAAV), 163 to 183 (ESLP…TVAY), 213 to 233 (LIIG…GWLM), 234 to 254 (NLGG…THQQ), and 268 to 288 (AFLN…ISYW).

This sequence belongs to the UbiA prenyltransferase family. Requires Mg(2+) as cofactor.

It is found in the cell inner membrane. The catalysed reaction is all-trans-octaprenyl diphosphate + 4-hydroxybenzoate = 4-hydroxy-3-(all-trans-octaprenyl)benzoate + diphosphate. The protein operates within cofactor biosynthesis; ubiquinone biosynthesis. Functionally, catalyzes the prenylation of para-hydroxybenzoate (PHB) with an all-trans polyprenyl group. Mediates the second step in the final reaction sequence of ubiquinone-8 (UQ-8) biosynthesis, which is the condensation of the polyisoprenoid side chain with PHB, generating the first membrane-bound Q intermediate 3-octaprenyl-4-hydroxybenzoate. This chain is 4-hydroxybenzoate octaprenyltransferase, found in Yersinia pseudotuberculosis serotype O:1b (strain IP 31758).